The chain runs to 454 residues: Bifunctional protein GlmU (454 aa).

The interval 1-226 (MALNVVILAA…AIEVEGANNR (226 aa)) is pyrophosphorylase. UDP-N-acetyl-alpha-D-glucosamine contacts are provided by residues 8 to 11 (LAAG), Lys-22, Gln-73, 78 to 79 (GT), 100 to 102 (YGD), Gly-137, Glu-151, Asn-166, and Asn-224. Asp-102 is a binding site for Mg(2+). Mg(2+) is bound at residue Asn-224. The linker stretch occupies residues 227–247 (VQLAQLERAYQAREAEKLMLA). Residues 248–454 (GANLRDPHRI…DWKRPVKIKK (207 aa)) are N-acetyltransferase. Arg-330 and Lys-348 together coordinate UDP-N-acetyl-alpha-D-glucosamine. Catalysis depends on His-360, which acts as the Proton acceptor. UDP-N-acetyl-alpha-D-glucosamine is bound by residues Tyr-363 and Asn-374. Residues Ala-377, 383–384 (NY), Ser-402, Ala-420, and Arg-437 contribute to the acetyl-CoA site.

It in the N-terminal section; belongs to the N-acetylglucosamine-1-phosphate uridyltransferase family. In the C-terminal section; belongs to the transferase hexapeptide repeat family. In terms of assembly, homotrimer. Mg(2+) serves as cofactor.

Its subcellular location is the cytoplasm. It catalyses the reaction alpha-D-glucosamine 1-phosphate + acetyl-CoA = N-acetyl-alpha-D-glucosamine 1-phosphate + CoA + H(+). It carries out the reaction N-acetyl-alpha-D-glucosamine 1-phosphate + UTP + H(+) = UDP-N-acetyl-alpha-D-glucosamine + diphosphate. It functions in the pathway nucleotide-sugar biosynthesis; UDP-N-acetyl-alpha-D-glucosamine biosynthesis; N-acetyl-alpha-D-glucosamine 1-phosphate from alpha-D-glucosamine 6-phosphate (route II): step 2/2. It participates in nucleotide-sugar biosynthesis; UDP-N-acetyl-alpha-D-glucosamine biosynthesis; UDP-N-acetyl-alpha-D-glucosamine from N-acetyl-alpha-D-glucosamine 1-phosphate: step 1/1. Its pathway is bacterial outer membrane biogenesis; LPS lipid A biosynthesis. Catalyzes the last two sequential reactions in the de novo biosynthetic pathway for UDP-N-acetylglucosamine (UDP-GlcNAc). The C-terminal domain catalyzes the transfer of acetyl group from acetyl coenzyme A to glucosamine-1-phosphate (GlcN-1-P) to produce N-acetylglucosamine-1-phosphate (GlcNAc-1-P), which is converted into UDP-GlcNAc by the transfer of uridine 5-monophosphate (from uridine 5-triphosphate), a reaction catalyzed by the N-terminal domain. In Shewanella putrefaciens (strain CN-32 / ATCC BAA-453), this protein is Bifunctional protein GlmU.